The sequence spans 785 residues: Endonuclease MutS2 (785 aa).

Residue 334 to 341 (GPNTGGKT) coordinates ATP. Positions 710 to 785 (LDLRGYNVED…GVGATIAELK (76 aa)) constitute a Smr domain.

The protein belongs to the DNA mismatch repair MutS family. MutS2 subfamily. As to quaternary structure, homodimer. Binds to stalled ribosomes, contacting rRNA.

Functionally, endonuclease that is involved in the suppression of homologous recombination and thus may have a key role in the control of bacterial genetic diversity. Its function is as follows. Acts as a ribosome collision sensor, splitting the ribosome into its 2 subunits. Detects stalled/collided 70S ribosomes which it binds and splits by an ATP-hydrolysis driven conformational change. Acts upstream of the ribosome quality control system (RQC), a ribosome-associated complex that mediates the extraction of incompletely synthesized nascent chains from stalled ribosomes and their subsequent degradation. Probably generates substrates for RQC. The polypeptide is Endonuclease MutS2 (Brevibacillus brevis (strain 47 / JCM 6285 / NBRC 100599)).